The chain runs to 635 residues: DNA-directed RNA polymerase III subunit rpc3 (635 aa).

3 disordered regions span residues 131-164 (PEQS…SDQQ), 246-295 (VPRG…GYDT), and 386-424 (SGSI…LSSG). The segment covering 272 to 292 (SVDEDDEQDEEENEWSDDEMG) has biased composition (acidic residues). The segment covering 398–407 (DNRRGKRPLE) has biased composition (basic and acidic residues). Residues 411 to 424 (NGTNHEGANGLSSG) show a composition bias toward polar residues. Residues 562 to 583 (TYKAMSRCFQRLRFERNRLKEF) form a leucine-zipper region.

Belongs to the RNA polymerase beta chain family. Component of the RNA polymerase III (Pol III) complex consisting of 17 subunits.

Its subcellular location is the nucleus. Functionally, DNA-dependent RNA polymerase catalyzes the transcription of DNA into RNA using the four ribonucleoside triphosphates as substrates. Specific core component of RNA polymerase III which synthesizes small RNAs, such as 5S rRNA and tRNAs. In Aspergillus clavatus (strain ATCC 1007 / CBS 513.65 / DSM 816 / NCTC 3887 / NRRL 1 / QM 1276 / 107), this protein is DNA-directed RNA polymerase III subunit rpc3 (rpc82).